Here is a 103-residue protein sequence, read N- to C-terminus: Histone H4 (103 aa).

Over residues 1 to 14 the composition is skewed to gly residues; it reads MSGRGKGGKGLGKG. Positions 1–20 are disordered; it reads MSGRGKGGKGLGKGGAKRHR. An N6-acetyl-N6-methyllysine; alternate modification is found at Lys-6. Residues Lys-6, Lys-9, and Lys-13 each carry the N6-methyllysine; alternate modification. Lys-13 carries the N6-acetyl-N6-methyllysine; alternate modification. Residues 17–21 mediate DNA binding; the sequence is KRHRK. At Lys-92 the chain carries N6-glutaryllysine.

Belongs to the histone H4 family. The nucleosome is a histone octamer containing two molecules each of H2A, H2B, H3 and H4 assembled in one H3-H4 heterotetramer and two H2A-H2B heterodimers. The octamer wraps approximately 147 bp of DNA. Post-translationally, glutarylation at Lys-92 (H4K91glu) destabilizes nucleosomes by promoting dissociation of the H2A-H2B dimers from nucleosomes.

It localises to the nucleus. The protein resides in the chromosome. Core component of nucleosome. Nucleosomes wrap and compact DNA into chromatin, limiting DNA accessibility to the cellular machineries which require DNA as a template. Histones thereby play a central role in transcription regulation, DNA repair, DNA replication and chromosomal stability. DNA accessibility is regulated via a complex set of post-translational modifications of histones, also called histone code, and nucleosome remodeling. This Phanerodontia chrysosporium (White-rot fungus) protein is Histone H4 (H4.1).